The sequence spans 1561 residues: MDNHSSSSNPSSLSSSSSSSSSSSSFLSDHVKKEEQNGLDTIKEEIENKIENEEEEEKIEEKPIEKVEEEKIIVQKEEEEKIEEEPIEKEEEKKVEEEKFEQDNINTTVEAKTLETSTEPIATEVVDEKSITSNNENLEEQQKEDVISIPPPQQEQQEQQEQQEKQKEETKPSIREEVKEKIKGKLSEIKEEIKDIKEEIKHVIREEVTEPIIVVENNNSPPPPPPPPSITVQSSSPVSSQISSPVSSPVSSPKPSVTFNEDGRKRKEGGITASISSEDIMALSSSTSTNNKGIPKENKRTASTILRSKSSPNPGANNPNHNKDGNNSSSSSSSNNNSDNNNNSDNNSNNNNINNNNSSSNNLNYDSSDIDTEAIPKFYHDFKIHRGTSSCVYCGENTRLWSTSYKCFFCGVVCHKKCLDSMNTIPCSSAIHNIKGKNRSQTISGYAPPNSLALQAPPYISVAKPSSITNSSSKSTPSLLSAPPSQSNSNNSSPNISSKSNPNSPITTSATTTTTTATISSLSPTSISSPPIASEQPPSPLLQQQQQQQQQQQQQQQQQQQQQQQQQQISTTQLQDLNNTSEKPDDDMINLMFDTLMVDLDLNLPASKLSTTQKWLLLEQKFKLKKDELLPEYFINALKEQPSKSIFQSLVVILRTNVTKNWMCSFVQLNGVEILFEILSKSKRKDYKDDCLSCIGKVMSNPIGLNSVAQLPMAPKTITKVLRSKQYCIKSKAMAIELLTVMLLDKYVPGGCSLVLKALTKTKEKKRFSFFVRFIKDNESLELKTKALCFINVLIFEMEDMNVRVNIRSEFLRLGLYTYLREIKKTITHEKTLFTQIEIFEEMMNEDTQELDLRLEDLKRQLGIDIDDVDQVFKALKNTTSKSGLNRQLLNILQNLLVIKACDPTDGVKYFILCDTLVKQISLHKGGFEDPSNFDFRGLMVGLESATAEVTLNRKLGELEKQNIDKAMKIQEQDINIKSLLDLLKQLKDGGTAPDASMIKKIEEMIKQMEPPPPPISVKSPDDPNNAAPIVVAPIPPPPPPISGAPPPPPPPPPPMKGGAGPPPPPPPPGKLGAKKPPAGVQCRPPPKVPKPSHPLKAYQWVKLAPVKVNDSLFDKLGPMNDINLPWNQIEEEFAAKVIVREKKAIVKPKGPTQVIDPKLGQNISIFLSQFKGVEPKQLITYIQSMDESKMSRDQVKQISKLLPSREDLAALKEFLQAEDRSKLSIADQYCIDIGAFPFASEKISMFLLKSELKSRLDEVKPQIAAVSVACDEVYKSKKLIRIIEIILVLGNFINYGTPRGDISGYKLDSLIKLSDTKSSDLSSNLINTFVKYCQEKEPNLLTFADELPSLTTARKTIWSGVVADVSSIGRDVHSVKQIVETLQKSNEPFNQSIIDFLATASTEVEKLRKLLESTQENFKKLCKYFAEEEGKSQPEEFFDIFGRFITLFENATTQLQQQKEEQLKEEKRLQQKQQRQERAVRKLTTSNESASASPNHAKSTDDKSDEDDDIVNDLLMAVRDGDAFRQAKGRRRTTHQIATSKMISNNLDPSKILPTSPNKN.

The segment covering 1–28 (MDNHSSSSNPSSLSSSSSSSSSSSSFLS) has biased composition (low complexity). 4 disordered regions span residues 1–63 (MDNH…EEKP), 77–187 (EEEE…GKLS), 211–279 (PIIV…SSED), and 305–365 (ILRS…NLNY). Residues 29–51 (DHVKKEEQNGLDTIKEEIENKIE) are compositionally biased toward basic and acidic residues. Positions 32–85 (KKEEQNGLDTIKEEIENKIENEEEEEKIEEKPIEKVEEEKIIVQKEEEEKIEEE) form a coiled coil. The span at 80-89 (EKIEEEPIEK) shows a compositional bias: acidic residues. Residues 103–120 (DNINTTVEAKTLETSTEP) show a composition bias toward polar residues. A coiled-coil region spans residues 158–208 (EQQEQQEKQKEETKPSIREEVKEKIKGKLSEIKEEIKDIKEEIKHVIREEV). Positions 162-187 (QQEKQKEETKPSIREEVKEKIKGKLS) are enriched in basic and acidic residues. The span at 220–229 (SPPPPPPPPS) shows a compositional bias: pro residues. Residues 230-258 (ITVQSSSPVSSQISSPVSSPVSSPKPSVT) are compositionally biased toward low complexity. Polar residues predominate over residues 305-320 (ILRSKSSPNPGANNPN). The segment covering 326-365 (NNSSSSSSSNNNSDNNNNSDNNSNNNNINNNNSSSNNLNY) has biased composition (low complexity). A Phorbol-ester/DAG-type zinc finger spans residues 379 to 427 (YHDFKIHRGTSSCVYCGENTRLWSTSYKCFFCGVVCHKKCLDSMNTIPC). Residues 465–534 (PSSITNSSSK…TSISSPPIAS (70 aa)) are compositionally biased toward low complexity. Residues 465–549 (PSSITNSSSK…PLLQQQQQQQ (85 aa)) are disordered. Residues 541–573 (LLQQQQQQQQQQQQQQQQQQQQQQQQQQISTTQ) adopt a coiled-coil conformation. The region spanning 581 to 929 (SEKPDDDMIN…QISLHKGGFE (349 aa)) is the GBD/FH3 domain. A coiled-coil region spans residues 952–989 (LNRKLGELEKQNIDKAMKIQEQDINIKSLLDLLKQLKD). 3 disordered regions span residues 1009-1092 (MEPP…VPKP), 1466-1508 (EEKR…SDED), and 1526-1561 (RQAK…PNKN). A compositionally biased stretch (low complexity) spans 1017–1033 (SVKSPDDPNNAAPIVVA). Residues 1019–1081 (KSPDDPNNAA…LGAKKPPAGV (63 aa)) form the FH1 domain. The segment covering 1034–1070 (PIPPPPPPISGAPPPPPPPPPPMKGGAGPPPPPPPPG) has biased composition (pro residues). The span at 1071–1081 (KLGAKKPPAGV) shows a compositional bias: low complexity. Residues 1086 to 1475 (PPKVPKPSHP…EEKRLQQKQQ (390 aa)) enclose the FH2 domain. Residues 1398–1491 (LATASTEVEK…RKLTTSNESA (94 aa)) are a coiled coil. Positions 1466–1481 (EEKRLQQKQQRQERAV) are enriched in basic and acidic residues. Composition is skewed to polar residues over residues 1484–1498 (LTTS…PNHA) and 1536–1561 (HQIA…PNKN). A DAD domain is found at 1488–1518 (NESASASPNHAKSTDDKSDEDDDIVNDLLMA).

Belongs to the formin homology family. Diaphanous subfamily. In terms of assembly, interacts (via GBD/FH3 domain) with activated Rho-GTPases.

Functionally, formins play an important role in the nucleation of actin and the formation of linear actin filaments. The sequence is that of Formin-E (forE) from Dictyostelium discoideum (Social amoeba).